The chain runs to 384 residues: Queuine tRNA-ribosyltransferase (384 aa).

Residue aspartate 92 is the Proton acceptor of the active site. Residues 92–96 (DSGGF), aspartate 146, glutamine 190, and glycine 217 contribute to the substrate site. An RNA binding region spans residues 248–254 (GVGRPED). Catalysis depends on aspartate 267, which acts as the Nucleophile. Residues 272-276 (TRHAR) form an RNA binding; important for wobble base 34 recognition region. Positions 305, 307, 310, and 337 each coordinate Zn(2+).

It belongs to the queuine tRNA-ribosyltransferase family. In terms of assembly, homodimer. Within each dimer, one monomer is responsible for RNA recognition and catalysis, while the other monomer binds to the replacement base PreQ1. It depends on Zn(2+) as a cofactor.

The catalysed reaction is 7-aminomethyl-7-carbaguanine + guanosine(34) in tRNA = 7-aminomethyl-7-carbaguanosine(34) in tRNA + guanine. The protein operates within tRNA modification; tRNA-queuosine biosynthesis. Catalyzes the base-exchange of a guanine (G) residue with the queuine precursor 7-aminomethyl-7-deazaguanine (PreQ1) at position 34 (anticodon wobble position) in tRNAs with GU(N) anticodons (tRNA-Asp, -Asn, -His and -Tyr). Catalysis occurs through a double-displacement mechanism. The nucleophile active site attacks the C1' of nucleotide 34 to detach the guanine base from the RNA, forming a covalent enzyme-RNA intermediate. The proton acceptor active site deprotonates the incoming PreQ1, allowing a nucleophilic attack on the C1' of the ribose to form the product. After dissociation, two additional enzymatic reactions on the tRNA convert PreQ1 to queuine (Q), resulting in the hypermodified nucleoside queuosine (7-(((4,5-cis-dihydroxy-2-cyclopenten-1-yl)amino)methyl)-7-deazaguanosine). This is Queuine tRNA-ribosyltransferase from Xylella fastidiosa (strain 9a5c).